A 164-amino-acid polypeptide reads, in one-letter code: FMN reductase (NADH) RutF (164 aa).

This sequence belongs to the non-flavoprotein flavin reductase family. RutF subfamily.

The enzyme catalyses FMNH2 + NAD(+) = FMN + NADH + 2 H(+). Catalyzes the reduction of FMN to FMNH2 which is used to reduce pyrimidine by RutA via the Rut pathway. The protein is FMN reductase (NADH) RutF of Klebsiella pneumoniae subsp. pneumoniae (strain ATCC 700721 / MGH 78578).